A 189-amino-acid chain; its full sequence is Peptidyl-tRNA hydrolase (189 aa).

Residue tyrosine 14 coordinates tRNA. Histidine 19 (proton acceptor) is an active-site residue. 3 residues coordinate tRNA: tyrosine 64, asparagine 66, and asparagine 112.

The protein belongs to the PTH family. As to quaternary structure, monomer.

The protein resides in the cytoplasm. The catalysed reaction is an N-acyl-L-alpha-aminoacyl-tRNA + H2O = an N-acyl-L-amino acid + a tRNA + H(+). In terms of biological role, hydrolyzes ribosome-free peptidyl-tRNAs (with 1 or more amino acids incorporated), which drop off the ribosome during protein synthesis, or as a result of ribosome stalling. Its function is as follows. Catalyzes the release of premature peptidyl moieties from peptidyl-tRNA molecules trapped in stalled 50S ribosomal subunits, and thus maintains levels of free tRNAs and 50S ribosomes. This Dehalococcoides mccartyi (strain CBDB1) protein is Peptidyl-tRNA hydrolase.